Consider the following 375-residue polypeptide: Protein arginine N-methyltransferase 6 (375 aa).

The tract at residues 1–36 (MSQPKRRKLESGGGGEGGEGTEEEDGGELEVAVPRP) is disordered. Residues 19–28 (EGTEEEDGGE) are compositionally biased toward acidic residues. The residue at position 21 (threonine 21) is a Phosphothreonine. Arginine 38 is subject to Asymmetric dimethylarginine; by autocatalysis. Positions 44–374 (DQLYYQCYSD…EEKTKDFAME (331 aa)) constitute an SAM-dependent MTase PRMT-type domain. 5 residues coordinate S-adenosyl-L-methionine: histidine 57, arginine 66, glycine 90, glutamate 112, and glutamate 141. Active-site residues include glutamate 155 and glutamate 164.

It belongs to the class I-like SAM-binding methyltransferase superfamily. Protein arginine N-methyltransferase family. PRMT6 subfamily. In terms of assembly, interacts with (and methylates) HIV-1 Tat, Rev and Nucleocapsid protein p7 (NC). Interacts with EPB41L3 and NCOA1. Automethylation enhances its stability.

It is found in the nucleus. The enzyme catalyses L-arginyl-[protein] + 2 S-adenosyl-L-methionine = N(omega),N(omega)-dimethyl-L-arginyl-[protein] + 2 S-adenosyl-L-homocysteine + 2 H(+). Functionally, arginine methyltransferase that can catalyze the formation of both omega-N monomethylarginine (MMA) and asymmetrical dimethylarginine (aDMA), with a strong preference for the formation of aDMA. Preferentially methylates arginyl residues present in a glycine and arginine-rich domain and displays preference for monomethylated substrates. Specifically mediates the asymmetric dimethylation of histone H3 'Arg-2' to form H3R2me2a. H3R2me2a represents a specific tag for epigenetic transcriptional repression and is mutually exclusive with methylation on histone H3 'Lys-4' (H3K4me2 and H3K4me3). Acts as a transcriptional repressor of various genes such as HOXA2, THBS1 and TP53. Repression of TP53 blocks cellular senescence. Also methylates histone H2A and H4 'Arg-3' (H2AR3me and H4R3me, respectively). Acts as a regulator of DNA base excision during DNA repair by mediating the methylation of DNA polymerase beta (POLB), leading to the stimulation of its polymerase activity by enhancing DNA binding and processivity. Methylates HMGA1. Regulates alternative splicing events. Acts as a transcriptional coactivator of a number of steroid hormone receptors including ESR1, ESR2, PGR and NR3C1. Promotes fasting-induced transcriptional activation of the gluconeogenic program through methylation of the CRTC2 transcription coactivator. Methylates GPS2, protecting GPS2 from ubiquitination and degradation. Methylates SIRT7, inhibiting SIRT7 histone deacetylase activity and promoting mitochondria biogenesis. This is Protein arginine N-methyltransferase 6 (PRMT6) from Bos taurus (Bovine).